Here is a 330-residue protein sequence, read N- to C-terminus: Aspartate--ammonia ligase (330 aa).

This sequence belongs to the class-II aminoacyl-tRNA synthetase family. AsnA subfamily.

It localises to the cytoplasm. The enzyme catalyses L-aspartate + NH4(+) + ATP = L-asparagine + AMP + diphosphate + H(+). The protein operates within amino-acid biosynthesis; L-asparagine biosynthesis; L-asparagine from L-aspartate (ammonia route): step 1/1. In Haemophilus influenzae (strain ATCC 51907 / DSM 11121 / KW20 / Rd), this protein is Aspartate--ammonia ligase.